The sequence spans 243 residues: UPF0280 protein Memar_1519 (243 aa).

Belongs to the UPF0280 family.

This chain is UPF0280 protein Memar_1519, found in Methanoculleus marisnigri (strain ATCC 35101 / DSM 1498 / JR1).